A 100-amino-acid polypeptide reads, in one-letter code: NADH-quinone oxidoreductase subunit K (100 aa).

Transmembrane regions (helical) follow at residues leucine 4–isoleucine 24, leucine 28–valine 48, and valine 60–leucine 80.

This sequence belongs to the complex I subunit 4L family. As to quaternary structure, NDH-1 is composed of 13 different subunits. Subunits NuoA, H, J, K, L, M, N constitute the membrane sector of the complex.

Its subcellular location is the cell inner membrane. The enzyme catalyses a quinone + NADH + 5 H(+)(in) = a quinol + NAD(+) + 4 H(+)(out). Its function is as follows. NDH-1 shuttles electrons from NADH, via FMN and iron-sulfur (Fe-S) centers, to quinones in the respiratory chain. The immediate electron acceptor for the enzyme in this species is believed to be ubiquinone. Couples the redox reaction to proton translocation (for every two electrons transferred, four hydrogen ions are translocated across the cytoplasmic membrane), and thus conserves the redox energy in a proton gradient. The polypeptide is NADH-quinone oxidoreductase subunit K (Musicola paradisiaca (strain Ech703) (Dickeya paradisiaca)).